We begin with the raw amino-acid sequence, 212 residues long: Noggin-2 (212 aa).

Residues 1-23 (MGSITRALPLLLLLLLCAHGTAS) form the signal peptide. Residues 37–56 (LPVPDLIENPDPEHDPREQD) form a disordered region. Residues 47–56 (DPEHDPREQD) are compositionally biased toward basic and acidic residues. The N-linked (GlcNAc...) asparagine glycan is linked to Asn84.

It belongs to the noggin family. Homodimer; disulfide-linked.

It localises to the secreted. Functionally, inhibitor of bone morphogenetic proteins (BMP) signaling. In Danio rerio (Zebrafish), this protein is Noggin-2 (nog2).